We begin with the raw amino-acid sequence, 186 residues long: UPF0200 protein Mbar_A0975 (186 aa).

8 to 15 lines the ATP pocket; sequence GMPASGKS.

Belongs to the UPF0200 family.

The protein is UPF0200 protein Mbar_A0975 of Methanosarcina barkeri (strain Fusaro / DSM 804).